The following is a 218-amino-acid chain: Ribose-5-phosphate isomerase A (218 aa).

Substrate-binding positions include 28–31 (TGST), 81–84 (DGAD), and 94–97 (KGGG). The active-site Proton acceptor is the Glu-103. Lys-121 contributes to the substrate binding site.

It belongs to the ribose 5-phosphate isomerase family. Homodimer.

It catalyses the reaction aldehydo-D-ribose 5-phosphate = D-ribulose 5-phosphate. The protein operates within carbohydrate degradation; pentose phosphate pathway; D-ribose 5-phosphate from D-ribulose 5-phosphate (non-oxidative stage): step 1/1. Its function is as follows. Catalyzes the reversible conversion of ribose-5-phosphate to ribulose 5-phosphate. This chain is Ribose-5-phosphate isomerase A, found in Psychromonas ingrahamii (strain DSM 17664 / CCUG 51855 / 37).